Reading from the N-terminus, the 512-residue chain is UDP-N-acetylmuramate--L-alanine ligase (512 aa).

132–138 (GAHGKTT) serves as a coordination point for ATP.

It belongs to the MurCDEF family.

It is found in the cytoplasm. The catalysed reaction is UDP-N-acetyl-alpha-D-muramate + L-alanine + ATP = UDP-N-acetyl-alpha-D-muramoyl-L-alanine + ADP + phosphate + H(+). It participates in cell wall biogenesis; peptidoglycan biosynthesis. In terms of biological role, cell wall formation. This Bifidobacterium longum (strain NCC 2705) protein is UDP-N-acetylmuramate--L-alanine ligase.